A 98-amino-acid chain; its full sequence is MSGDDLDERIETYYVRVRGVVQGVGFRHATVREAHALKLRGWVANLDDGSVEAMLQGSAPQIDRMLAWLRHGPPAAHVTEVTFEEHRTDKRFERFQQH.

Positions 12 to 98 (TYYVRVRGVV…DKRFERFQQH (87 aa)) constitute an Acylphosphatase-like domain. Residues Arg-27 and Asn-45 contribute to the active site.

It belongs to the acylphosphatase family.

It carries out the reaction an acyl phosphate + H2O = a carboxylate + phosphate + H(+). This chain is Acylphosphatase (acyP), found in Burkholderia mallei (strain NCTC 10247).